We begin with the raw amino-acid sequence, 209 residues long: Ribosomal RNA large subunit methyltransferase E (209 aa).

S-adenosyl-L-methionine is bound by residues glycine 63, tryptophan 65, aspartate 83, aspartate 99, and aspartate 124. The Proton acceptor role is filled by lysine 164.

Belongs to the class I-like SAM-binding methyltransferase superfamily. RNA methyltransferase RlmE family.

It localises to the cytoplasm. The catalysed reaction is uridine(2552) in 23S rRNA + S-adenosyl-L-methionine = 2'-O-methyluridine(2552) in 23S rRNA + S-adenosyl-L-homocysteine + H(+). Its function is as follows. Specifically methylates the uridine in position 2552 of 23S rRNA at the 2'-O position of the ribose in the fully assembled 50S ribosomal subunit. The polypeptide is Ribosomal RNA large subunit methyltransferase E (Escherichia coli O81 (strain ED1a)).